We begin with the raw amino-acid sequence, 73 residues long: Large ribosomal subunit protein bL31 (73 aa).

The protein belongs to the bacterial ribosomal protein bL31 family. Type A subfamily. As to quaternary structure, part of the 50S ribosomal subunit.

Its function is as follows. Binds the 23S rRNA. This chain is Large ribosomal subunit protein bL31, found in Synechococcus sp. (strain JA-3-3Ab) (Cyanobacteria bacterium Yellowstone A-Prime).